Here is a 396-residue protein sequence, read N- to C-terminus: Ribosomal RNA large subunit methyltransferase I (396 aa).

Residues 2 to 79 (AVRIKLKPGR…REEEIDREFF (78 aa)) form the PUA domain.

It belongs to the methyltransferase superfamily. RlmI family.

It is found in the cytoplasm. The enzyme catalyses cytidine(1962) in 23S rRNA + S-adenosyl-L-methionine = 5-methylcytidine(1962) in 23S rRNA + S-adenosyl-L-homocysteine + H(+). In terms of biological role, specifically methylates the cytosine at position 1962 (m5C1962) of 23S rRNA. The polypeptide is Ribosomal RNA large subunit methyltransferase I (Shewanella sp. (strain ANA-3)).